Here is a 421-residue protein sequence, read N- to C-terminus: UPF0300 protein C737.04 (421 aa).

This sequence belongs to the UPF0300 family.

It localises to the cytoplasm. The chain is UPF0300 protein C737.04 from Schizosaccharomyces pombe (strain 972 / ATCC 24843) (Fission yeast).